Reading from the N-terminus, the 284-residue chain is Polyamine aminopropyltransferase (284 aa).

The region spanning 6–242 (KGWFTEVCKE…GWWSATLAGH (237 aa)) is the PABS domain. Gln-36 contributes to the S-methyl-5'-thioadenosine binding site. 2 residues coordinate spermidine: His-67 and Asp-91. S-methyl-5'-thioadenosine contacts are provided by residues Glu-111 and 142–143 (DG). Catalysis depends on Asp-161, which acts as the Proton acceptor. 161 to 164 (DSTD) lines the spermidine pocket.

This sequence belongs to the spermidine/spermine synthase family. In terms of assembly, homodimer or homotetramer.

The protein localises to the cytoplasm. The enzyme catalyses S-adenosyl 3-(methylsulfanyl)propylamine + putrescine = S-methyl-5'-thioadenosine + spermidine + H(+). The protein operates within amine and polyamine biosynthesis; spermidine biosynthesis; spermidine from putrescine: step 1/1. Functionally, catalyzes the irreversible transfer of a propylamine group from the amino donor S-adenosylmethioninamine (decarboxy-AdoMet) to putrescine (1,4-diaminobutane) to yield spermidine. The sequence is that of Polyamine aminopropyltransferase from Nitrosococcus oceani (strain ATCC 19707 / BCRC 17464 / JCM 30415 / NCIMB 11848 / C-107).